We begin with the raw amino-acid sequence, 341 residues long: Tetraacyldisaccharide 4'-kinase (341 aa).

54-61 (TVGGAGKT) is a binding site for ATP.

Belongs to the LpxK family.

It catalyses the reaction a lipid A disaccharide + ATP = a lipid IVA + ADP + H(+). The protein operates within glycolipid biosynthesis; lipid IV(A) biosynthesis; lipid IV(A) from (3R)-3-hydroxytetradecanoyl-[acyl-carrier-protein] and UDP-N-acetyl-alpha-D-glucosamine: step 6/6. In terms of biological role, transfers the gamma-phosphate of ATP to the 4'-position of a tetraacyldisaccharide 1-phosphate intermediate (termed DS-1-P) to form tetraacyldisaccharide 1,4'-bis-phosphate (lipid IVA). The sequence is that of Tetraacyldisaccharide 4'-kinase from Brucella ovis (strain ATCC 25840 / 63/290 / NCTC 10512).